Consider the following 179-residue polypeptide: Low molecular weight phosphotyrosine protein phosphatase (179 aa).

The active-site Nucleophile is the Cys15. The active site involves Arg21. Residue Asp148 is the Proton donor of the active site.

The protein belongs to the low molecular weight phosphotyrosine protein phosphatase family.

Its subcellular location is the cytoplasm. It catalyses the reaction O-phospho-L-tyrosyl-[protein] + H2O = L-tyrosyl-[protein] + phosphate. It carries out the reaction a phosphate monoester + H2O = an alcohol + phosphate. Functionally, acts on tyrosine phosphorylated proteins, low-MW aryl phosphates and natural and synthetic acyl phosphates. This is Low molecular weight phosphotyrosine protein phosphatase (acp1) from Dictyostelium discoideum (Social amoeba).